The following is a 244-amino-acid chain: Small ribosomal subunit protein eS4 (244 aa).

In terms of domain architecture, S4 RNA-binding spans 43 to 106 (LPLLLVVRDV…DENYLVLFDE (64 aa)).

Belongs to the eukaryotic ribosomal protein eS4 family.

This Methanococcus maripaludis (strain C7 / ATCC BAA-1331) protein is Small ribosomal subunit protein eS4.